The primary structure comprises 604 residues: MSAKKKDLLSSAMKRTSEWISSQEVSSDVTVHVGEASFSLHKFPLMSKCGFIKKLVSESSKDSDSTVIKIPDIPGGSEAFELAAKFCYGINFDMSTENIAMLRCAAEYLEMTEEHSVENLVVRAEAYLNEVALKSLSSSITVLHKSEKLLPIAERVKLVSRCIDAIAYMTCQESHFCSPSSSNSGNNEVVVQQQSKQPVVDWWAEDLTVLRIDSFQRVLIAMMARGFKQYGLGPVLMLYAQKSLRGLEIFGKGMKKIEPKQEHEKRVILETIVSLLPREKNAMSVSFLSMLLRAAIFLETTVACRLDLENRMGLQLGQAVLDDLLIPSYSFTGDHSMFDTDTVQRILMNYLEFEVEGVRLSNNGVDLAGDMERVGKLLENYMAEIASDRNVSLQKFIGLAELIPEQSRVTEDGMYRAVDIYLKAHPNMSDVERKKVCSLMDCQKLSREACAHAAQNDRLPVQTIVQVLYYEQQRLRGEVTNDSDSPAPPPPQPAAVLPPKLSSYTDELSKLKRENQDLKLELLKMKMKLKEFEKESEKKTSSSTISTNPSSPISTASTGKPPLPRKSFINSVSKKLGKLNPFSITPYNGRGRTKPPKDRRHSIS.

Positions Ser-27–Thr-96 constitute a BTB domain. Residues Asp-201–Arg-474 form the NPH3 domain. Tyr-415 carries the post-translational modification Phosphotyrosine. Disordered regions lie at residues Glu-478–Pro-499 and Phe-532–Ser-604. Positions Lys-500–Ser-541 form a coiled coil. Positions Ser-541–Thr-558 are enriched in low complexity. Over residues Gly-591–Ser-604 the composition is skewed to basic residues.

This sequence belongs to the NPH3 family. In terms of assembly, interacts with CAMTA3 and CUL3A.

Its pathway is protein modification; protein ubiquitination. In terms of biological role, acts as a substrate-specific adapter of an E3 ubiquitin-protein ligase complex (CUL3-RBX1-BTB) which mediates the ubiquitination and subsequent proteasomal degradation of target proteins. Involved in disease resistance. Acts as a substrate adapter that recruits CAMTA3/SR1 for ubiquitination and degradation during pathogen infection. Acts as a positive regulator of plant defense by removing the defense suppressor CAMTA3/SR1. This chain is BTB/POZ domain-containing protein SR1IP1, found in Arabidopsis thaliana (Mouse-ear cress).